The primary structure comprises 8799 residues: Nesprin-1 (8799 aa).

The tract at residues 1-289 is actin-binding; it reads MATSRASSRS…TQYPDIHGAG (289 aa). The Cytoplasmic portion of the chain corresponds to 1–8748; it reads MATSRASSRS…GRAFLFRILR (8748 aa). Calponin-homology (CH) domains follow at residues 27-134 and 178-283; these read IVQK…LYFQ and GNAK…TQYP. Spectrin repeat units follow at residues 314 to 397, 398 to 502, 503 to 609, 610 to 703, 704 to 815, 816 to 923, 924 to 1024, 1025 to 1122, 1123 to 1246, 1247 to 1333, 1334 to 1442, 1443 to 1548, 1549 to 1651, 1652 to 1761, 1762 to 1877, 1878 to 1974, 1975 to 2079, 2080 to 2193, 2194 to 2301, 2302 to 2399, 2400 to 2511, 2512 to 2617, 2618 to 2729, 2730 to 2836, 2837 to 2960, 2961 to 3060, 3061 to 3169, 3170 to 3273, 3274 to 3385, 3386 to 3488, 3489 to 3591, 3592 to 3718, 3719 to 3812, 3813 to 3918, 3919 to 4026, 4027 to 4137, 4138 to 4233, 4234 to 4337, 4338 to 4449, 4450 to 4558, 4559 to 4667, 4668 to 4774, 4775 to 4880, 4881 to 4989, 4990 to 5097, 5098 to 5207, 5208 to 5316, 5317 to 5422, 5423 to 5520, 5521 to 5628, 5629 to 5745, and 5746 to 5851; these read RDDR…SRLF, DWHI…HLMK, MEFL…SMLE, EVIS…YARA, DEMD…QLTV, PLEE…KHVE, ANSR…HLKI, AVEK…LVDD, PDKW…SSLE, GLIS…ERRI, QVSL…MEMV, KSKW…ILGH, LSQQ…LEDL, LARW…LQSV, LAEH…SHAC, MSTL…ADAL, VALK…QGQC, CGLI…LRVS, LSIW…KDFT, AQRT…QTQA, RIQD…LQDC, VSEL…LRSC, QLAL…LESV, IDQW…VEDL, VKDH…FGQV, TQLE…QNKE, QILQ…LENL, KIQM…VSRL, DRII…LEGA, LSKW…LEKL, VRLH…RMQL, NNVV…YSDW, YGST…LEKG, LHLA…LEAK, VKDH…QRVY, RSLE…KSLK, AELW…REQD, LQRT…IQVS, VTNL…LNKA, LSEK…LEKS, LVSR…TQEA, ILAR…LEDT, TSVY…CESR, MVQS…LTEI, YSRC…LQRC, MVQW…LEDA, VDEW…GKLV, KQEL…EEGK, AMSQ…LSKL, NQAL…LQDA, AKDM…PKEA, and VVQY…PSAH. Residues 314–8666 are a coiled coil; the sequence is RDDRLILKET…DLEKLLDMSS (8353 aa). Lys-377 is modified (phosphoserine). Residue Ser-732 is modified to Phosphoserine. Residues 1288-1310 form a disordered region; that stretch reads KKRDLQEQMEQAQQGGQAGPGQE. Thr-2268 is subject to Phosphothreonine. Ser-5655 is modified (phosphoserine). Positions 5868–5894 are disordered; the sequence is PVTEESGEEGTNSEISSPPACRSPSPV. 19 Spectrin repeats span residues 5971–6080, 6081–6187, 6377–6488, 6489–6584, 6585–6694, 6695–6798, 6799–6905, 6906–7023, 7024–7131, 7132–7240, 7241–7353, 7354–7457, 7458–7561, 7562–7674, 7675–7786, 7787–7886, 7887–8000, 8001–8109, and 8110–8221; these read LERQ…LEEK, LSDQ…SLGE, RQSI…RLQQ, ILRF…RSSL, HQNL…LEMW, SHLD…TILK, HWTR…QEKL, HQLQ…LEGL, LESW…LTSA, LGQW…SKAL, LQLW…LQAG, VVDY…LQSF, LLQH…RGII, DSQI…LAFL, LKDW…NEWA, VFSE…LKET, LVAV…IEET, WRLW…LKHF, and ISQR…VRLP. Phosphoserine is present on residues Asp-8225 and Ser-8227. The tract at residues 8237-8287 is disordered; the sequence is TALSDLRWQDPSADGMPSPQPSSNPSLSLPQPLRSERSGRDTPASVDSIPL. The span at 8257–8269 shows a compositional bias: low complexity; sequence PSSNPSLSLPQPL. Thr-8278 is subject to Phosphothreonine. A phosphoserine mark is found at Ser-8281, Ser-8284, and Ser-8308. Spectrin repeat units lie at residues 8332 to 8440, 8441 to 8550, and 8551 to 8668; these read SSLE…MKQN, LQKW…LQDA, and LMQC…SSSQ. Thr-8363 is subject to Phosphothreonine. Positions 8673–8735 are disordered; the sequence is SWSSADELDT…SDSSRSDPRP (63 aa). Polar residues-rich tracts occupy residues 8682-8698 and 8706-8718; these read TSGS…PNRQ and SLSQ…SSPK. Basic and acidic residues predominate over residues 8721-8735; it reads STRDGSDSSRSDPRP. The 60-residue stretch at 8740–8799 folds into the KASH domain; that stretch reads RAFLFRILRAALPFQLLLLLLIGLTCLVPMSEKDYSCALSNNFARSFHPMLRYTNGPPPL. The chain crosses the membrane as a helical; Anchor for type IV membrane protein span at residues 8749–8769; sequence AALPFQLLLLLLIGLTCLVPM. The Perinuclear space segment spans residues 8770–8799; sequence SEKDYSCALSNNFARSFHPMLRYTNGPPPL.

The protein belongs to the nesprin family. In terms of assembly, core component of LINC complexes which are composed of inner nuclear membrane SUN domain-containing proteins coupled to outer nuclear membrane KASH domain-containing nesprins. SUN and KASH domain-containing proteins seem to bind each other promiscuously; however, differentially expression of LINC complex constituents can give rise to specific assemblies. At least SUN1/2-containing core LINC complexes are proposed to be hexameric composed of three protomers of each KASH and SUN domain-containing protein. The SUN2:SYNE1/KASH1 LINC complex is a heterohexamer; the homotrimeric cloverleave-like conformation of the SUN domain is a prerequisite for LINC complex formation in which three separate SYNE1/KASH1 peptides bind at the interface of adjacent SUN domains. Self-associates. Interacts with SYNE3. Interacts with SUN3; proposed to form a spermatogenesis-specific LINC complex with SUN3 during sperm head formation. May interact with MUSK. Interacts with SPAG4/SUN4. Interacts with EMD and LMNA in vitro. Interacts with F-actin via its N-terminal domain. Interacts with DCTN1 and DYNC1I1/2; suggesting the association with the dynein-dynactin motor complex. Interacts (via KASH domain) with TMEM258. Post-translationally, the disulfid bond with SUN1 or SUN2 is required for stability of the respective LINC complex under tensile forces. Expressed in C2F3 and CH310T1/2 cells, brain and skeletal muscle (at protein level).

The protein localises to the nucleus outer membrane. It localises to the nucleus. It is found in the nucleus envelope. The protein resides in the cytoplasm. Its subcellular location is the cytoskeleton. The protein localises to the myofibril. It localises to the sarcomere. Its function is as follows. Multi-isomeric modular protein which forms a linking network between organelles and the actin cytoskeleton to maintain the subcellular spatial organization. As a component of the LINC (LInker of Nucleoskeleton and Cytoskeleton) complex involved in the connection between the nuclear lamina and the cytoskeleton. The nucleocytoplasmic interactions established by the LINC complex play an important role in the transmission of mechanical forces across the nuclear envelope and in nuclear movement and positioning. May be involved in nucleus-centrosome attachment. During interkinetic nuclear migration (INM) at G2 phase and nuclear migration in neural progenitors its LINC complex association with SUN1/2 and probably association with cytoplasmic dynein-dynactin motor complexes functions to pull the nucleus toward the centrosome; SYNE1 and SYNE2 seem to act redundantly in cerebellum, midbrain, brain stem, and other brain regions except cerebral cortex and hippocampus. Required for centrosome migration to the apical cell surface during early ciliogenesis. May be involved in nuclear remodeling during sperm head formation in spermatogenesis; a probable SUN3:SYNE1/KASH1 LINC complex may tether spermatid nuclei to posterior cytoskeletal structures such as the manchette. The polypeptide is Nesprin-1 (Mus musculus (Mouse)).